A 75-amino-acid polypeptide reads, in one-letter code: Anionic peptide (75 aa).

Residues 1 to 24 (MVSKSLIVLLLVSVLVSTFYTSEA) form the signal peptide.

It belongs to the non-disulfide-bridged peptide (NDBP) superfamily. Expressed by the venom gland.

It is found in the secreted. This Tityus discrepans (Venezuelan scorpion) protein is Anionic peptide.